Reading from the N-terminus, the 845-residue chain is ABC transporter A family member 9 (845 aa).

The next 7 helical transmembrane spans lie at 33–53 (CVQI…NFWV), 192–212 (AFVA…FLGG), 235–255 (IASL…MPLF), 292–312 (IYFI…FAVF), 318–338 (FAMF…SFFL), 347–367 (AASI…SILS), and 417–437 (SKII…ALYL). Positions 531–762 (VIIEGLTKHY…FGDGYSVRIN (232 aa)) constitute an ABC transporter domain. Residue 565 to 572 (GANGAGKT) coordinates ATP.

The protein belongs to the ABC transporter superfamily. ABCA family.

It localises to the membrane. This is ABC transporter A family member 9 (abcA9) from Dictyostelium discoideum (Social amoeba).